The primary structure comprises 328 residues: GTP 3',8-cyclase (328 aa).

One can recognise a Radical SAM core domain in the interval 1–229 (MNQVDYLRIS…DAQVRGSGPA (229 aa)). R8 contributes to the GTP binding site. Residues C15 and C19 each coordinate [4Fe-4S] cluster. Y21 provides a ligand contact to S-adenosyl-L-methionine. Residue C22 participates in [4Fe-4S] cluster binding. R60 serves as a coordination point for GTP. G64 serves as a coordination point for S-adenosyl-L-methionine. Residue T91 participates in GTP binding. An S-adenosyl-L-methionine-binding site is contributed by S115. K155 is a binding site for GTP. M189 is an S-adenosyl-L-methionine binding site. C252 and C255 together coordinate [4Fe-4S] cluster. 257–259 (RMR) is a GTP binding site. [4Fe-4S] cluster is bound at residue C269.

Belongs to the radical SAM superfamily. MoaA family. Monomer and homodimer. It depends on [4Fe-4S] cluster as a cofactor.

It catalyses the reaction GTP + AH2 + S-adenosyl-L-methionine = (8S)-3',8-cyclo-7,8-dihydroguanosine 5'-triphosphate + 5'-deoxyadenosine + L-methionine + A + H(+). Its pathway is cofactor biosynthesis; molybdopterin biosynthesis. In terms of biological role, catalyzes the cyclization of GTP to (8S)-3',8-cyclo-7,8-dihydroguanosine 5'-triphosphate. This Trichormus variabilis (strain ATCC 29413 / PCC 7937) (Anabaena variabilis) protein is GTP 3',8-cyclase.